Here is a 113-residue protein sequence, read N- to C-terminus: Large ribosomal subunit protein bL19 (113 aa).

It belongs to the bacterial ribosomal protein bL19 family.

Functionally, this protein is located at the 30S-50S ribosomal subunit interface and may play a role in the structure and function of the aminoacyl-tRNA binding site. The sequence is that of Large ribosomal subunit protein bL19 from Mycolicibacterium gilvum (strain PYR-GCK) (Mycobacterium gilvum (strain PYR-GCK)).